A 267-amino-acid chain; its full sequence is Kafirin PSK8 (267 aa).

The signal sequence occupies residues 1–19 (TKIFALLALHALLVSGTTA).

It belongs to the zein family.

Major seed storage prolamin. The protein is Kafirin PSK8 of Sorghum bicolor (Sorghum).